We begin with the raw amino-acid sequence, 283 residues long: BTB/POZ domain-containing protein KCTD15 (283 aa).

A disordered region spans residues 1–32 (MPHRKERPSGSSLHTHGSTGTAEGGNMSRLSL). Positions 9 to 21 (SGSSLHTHGSTGT) are enriched in low complexity. Phosphoserine is present on residues serine 31, serine 35, and serine 38. The BTB domain occupies 56–126 (APVHIDVGGH…LRTSKLLLPD (71 aa)).

Forms oligomers, predominantly homopentamers. Interacts with KCTD1, probably forming heteropentamers depending on its abundance in a cell-type dependent manner. Interacts with TFAP2A; this interaction inhibits TFAP2A transcriptional activation.

The protein resides in the nucleus. During embryonic development, it is involved in neural crest formation. Inhibits AP2 transcriptional activity by interaction with its activation domain. This Homo sapiens (Human) protein is BTB/POZ domain-containing protein KCTD15 (KCTD15).